The chain runs to 568 residues: 3-(3-hydroxy-phenyl)propionate/3-hydroxycinnamic acid hydroxylase (568 aa).

FAD-binding positions include 13 to 42 (DVVIVGAGPVGLTLANILGLQGVRTMIVEE) and 278 to 288 (FRKGRMFLAGD).

The protein belongs to the PheA/TfdB FAD monooxygenase family. FAD serves as cofactor.

It catalyses the reaction 3-(3-hydroxyphenyl)propanoate + NADH + O2 + H(+) = 3-(2,3-dihydroxyphenyl)propanoate + NAD(+) + H2O. The catalysed reaction is (2E)-3-(3-hydroxyphenyl)prop-2-enoate + NADH + O2 + H(+) = (2E)-3-(2,3-dihydroxyphenyl)prop-2-enoate + NAD(+) + H2O. It functions in the pathway aromatic compound metabolism; 3-phenylpropanoate degradation. In terms of biological role, catalyzes the insertion of one atom of molecular oxygen into position 2 of the phenyl ring of 3-(3-hydroxyphenyl)propionate (3-HPP) and hydroxycinnamic acid (3HCI). The polypeptide is 3-(3-hydroxy-phenyl)propionate/3-hydroxycinnamic acid hydroxylase (Mycobacterium sp. (strain JLS)).